We begin with the raw amino-acid sequence, 329 residues long: tRNA dimethylallyltransferase (329 aa).

Glycine 24–threonine 31 is a binding site for ATP. Threonine 26 to threonine 31 lines the substrate pocket. Residues aspartate 49–glutamine 52 are interaction with substrate tRNA.

It belongs to the IPP transferase family. As to quaternary structure, monomer. Requires Mg(2+) as cofactor.

It carries out the reaction adenosine(37) in tRNA + dimethylallyl diphosphate = N(6)-dimethylallyladenosine(37) in tRNA + diphosphate. Catalyzes the transfer of a dimethylallyl group onto the adenine at position 37 in tRNAs that read codons beginning with uridine, leading to the formation of N6-(dimethylallyl)adenosine (i(6)A). The protein is tRNA dimethylallyltransferase of Methylacidiphilum infernorum (isolate V4) (Methylokorus infernorum (strain V4)).